The following is a 399-amino-acid chain: Tyrosine--tRNA ligase (399 aa).

A 'HIGH' region motif is present at residues 42–51 (PTAPDLHLGH). Positions 226–230 (KMSKS) match the 'KMSKS' region motif. ATP is bound at residue Lys229. The 61-residue stretch at 336–396 (MPIAAVLNKA…GRKAFARITL (61 aa)) folds into the S4 RNA-binding domain.

This sequence belongs to the class-I aminoacyl-tRNA synthetase family. TyrS type 2 subfamily. In terms of assembly, homodimer.

It localises to the cytoplasm. It catalyses the reaction tRNA(Tyr) + L-tyrosine + ATP = L-tyrosyl-tRNA(Tyr) + AMP + diphosphate + H(+). Catalyzes the attachment of tyrosine to tRNA(Tyr) in a two-step reaction: tyrosine is first activated by ATP to form Tyr-AMP and then transferred to the acceptor end of tRNA(Tyr). The protein is Tyrosine--tRNA ligase of Pseudomonas fluorescens (strain ATCC BAA-477 / NRRL B-23932 / Pf-5).